The following is a 239-amino-acid chain: Pimeloyl-[acyl-carrier protein] methyl ester esterase (239 aa).

Residues Trp20, 77–78 (SM), and 138–142 (FISLQ) contribute to the substrate site. The Nucleophile role is filled by Ser77. Residues Asp192 and His220 contribute to the active site. His220 is a substrate binding site.

This sequence belongs to the AB hydrolase superfamily. Carboxylesterase BioH family. In terms of assembly, monomer.

Its subcellular location is the cytoplasm. It carries out the reaction 6-carboxyhexanoyl-[ACP] methyl ester + H2O = 6-carboxyhexanoyl-[ACP] + methanol + H(+). It participates in cofactor biosynthesis; biotin biosynthesis. Its function is as follows. The physiological role of BioH is to remove the methyl group introduced by BioC when the pimeloyl moiety is complete. It allows to synthesize pimeloyl-ACP via the fatty acid synthetic pathway through the hydrolysis of the ester bonds of pimeloyl-ACP esters. In Legionella pneumophila (strain Paris), this protein is Pimeloyl-[acyl-carrier protein] methyl ester esterase.